We begin with the raw amino-acid sequence, 119 residues long: Large ribosomal subunit protein bL20 (119 aa).

This sequence belongs to the bacterial ribosomal protein bL20 family.

Its function is as follows. Binds directly to 23S ribosomal RNA and is necessary for the in vitro assembly process of the 50S ribosomal subunit. It is not involved in the protein synthesizing functions of that subunit. The polypeptide is Large ribosomal subunit protein bL20 (Rhodopseudomonas palustris (strain BisB18)).